Here is a 195-residue protein sequence, read N- to C-terminus: Thymidine kinase (195 aa).

ATP contacts are provided by residues 15–22 (GSMFSGKS) and 88–91 (DEVQ). The Proton acceptor role is filled by E89. Residues C145, C148, C183, and C186 each coordinate Zn(2+).

This sequence belongs to the thymidine kinase family. As to quaternary structure, homotetramer.

Its subcellular location is the cytoplasm. It carries out the reaction thymidine + ATP = dTMP + ADP + H(+). This is Thymidine kinase from Bacillus cereus (strain AH187).